Here is a 729-residue protein sequence, read N- to C-terminus: Leucine-rich repeat flightless-interacting protein 1 (729 aa).

The residue at position 2 (Thr2) is an N-acetylthreonine. Ser16 is subject to Phosphoserine. Positions Ile40–Ser65 are enriched in basic and acidic residues. The disordered stretch occupies residues Ile40–Glu98. Positions Ser78 to Ser94 are enriched in low complexity. Phosphoserine occurs at positions 83, 84, 88, 90, 92, and 97. Positions Ser94–Lys194 form a coiled coil. Lys249 participates in a covalent cross-link: Glycyl lysine isopeptide (Lys-Gly) (interchain with G-Cter in SUMO1). Residues Val253–Ser729 form a disordered region. A compositionally biased stretch (polar residues) spans Glu260–Pro272. Residues Asp277–Glu297 are compositionally biased toward basic and acidic residues. Ser302 carries the phosphoserine modification. Over residues Gln313–Leu326 the composition is skewed to polar residues. Residues Lys327 to Ser343 show a composition bias toward basic and acidic residues. Polar residues predominate over residues Arg344 to Cys354. Phosphoserine is present on residues Ser346 and Ser348. 2 stretches are compositionally biased toward basic and acidic residues: residues Lys435–Leu445 and Lys482–Ile494. Residues Glu465–Pro567 form a DNA-binding region. Residues Ile506–Gln523 are compositionally biased toward polar residues. Residues Ser538 and Ser547 each carry the phosphoserine modification. The span at Lys550–Ala564 shows a compositional bias: basic residues. Residues Gln608–Val618 show a composition bias toward basic and acidic residues. A phosphoserine mark is found at Ser614 and Ser670. Polar residues-rich tracts occupy residues Cys667–Gly684 and Leu693–Gly710. The segment covering Ala713–Ser729 has biased composition (basic and acidic residues).

The protein belongs to the LRRFIP family. In terms of assembly, homodimer. May also form higher oligomers. Interacts with FLII. Interacts with MYD88. Competes with FLII for MyD88-binding, even in the absence of LPS. As to expression, ubiquitously expressed.

Its subcellular location is the nucleus. The protein resides in the cytoplasm. Functionally, transcriptional repressor which preferentially binds to the GC-rich consensus sequence (5'-AGCCCCCGGCG-3') and may regulate expression of TNF, EGFR and PDGFA. May control smooth muscle cells proliferation following artery injury through PDGFA repression. May also bind double-stranded RNA. Positively regulates Toll-like receptor (TLR) signaling in response to agonist probably by competing with the negative FLII regulator for MYD88-binding. The protein is Leucine-rich repeat flightless-interacting protein 1 (Lrrfip1) of Mus musculus (Mouse).